We begin with the raw amino-acid sequence, 520 residues long: Amine oxidase [flavin-containing] B (520 aa).

At serine 2 the chain carries N-acetylserine. Over 2-489 the chain is Cytoplasmic; the sequence is SSKCDVVVVG…TFLQRHLPSV (488 aa). Position 52 is an N6-acetyllysine (lysine 52). The residue at position 397 (cysteine 397) is an S-8alpha-FAD cysteine. Residues 490-516 form a helical; Anchor for type IV membrane protein membrane-spanning segment; it reads PGLLKLIGLTTIFSATALGFLAHKRGL. At 517–520 the chain is on the mitochondrial intermembrane side; the sequence is LVRI.

Monomer, homo- or heterodimer (containing two subunits of similar size). Each subunit contains a covalently bound flavin. Enzymatically active as monomer. FAD is required as a cofactor.

The protein resides in the mitochondrion outer membrane. It carries out the reaction a secondary aliphatic amine + O2 + H2O = a primary amine + an aldehyde + H2O2. It catalyses the reaction a primary methyl amine + O2 + H2O = an aldehyde + H2O2 + NH4(+). The catalysed reaction is benzylamine + O2 + H2O = benzaldehyde + H2O2 + NH4(+). The enzyme catalyses (R)-adrenaline + O2 + H2O = (R)-3,4-dihydroxymandelaldehyde + methylamine + H2O2. It carries out the reaction dopamine + O2 + H2O = 3,4-dihydroxyphenylacetaldehyde + H2O2 + NH4(+). It catalyses the reaction tyramine + O2 + H2O = (4-hydroxyphenyl)acetaldehyde + H2O2 + NH4(+). The catalysed reaction is (R)-noradrenaline + O2 + H2O = (R)-3,4-dihydroxymandelaldehyde + H2O2 + NH4(+). The enzyme catalyses 2-phenylethylamine + O2 + H2O = 2-phenylacetaldehyde + H2O2 + NH4(+). It carries out the reaction N-acetylputrescine + O2 + H2O = 4-acetamidobutanal + H2O2 + NH4(+). Catalyzes the oxidative deamination of primary and some secondary amines such as neurotransmitters, and exogenous amines including the tertiary amine, neurotoxin 1-methyl-4-phenyl-1,2,3,6-tetrahydropyridine (MPTP), with concomitant reduction of oxygen to hydrogen peroxide and participates in the metabolism of neuroactive and vasoactive amines in the central nervous system and peripheral tissues. Preferentially degrades benzylamine and phenylethylamine. The sequence is that of Amine oxidase [flavin-containing] B from Bos taurus (Bovine).